The sequence spans 319 residues: MKIELSMQPWNPGYSSEGATAQETYTCPKMIEMEQAEAQLAELDLLASMFPGENELIVNDQLAVAELKDCIEKKTMEGRSSKVYFTINMNLDVSDEKMAMFSLACILPFKYPAVLPEITVRSVLLSRSQQTQLNTDLTAFLQKHCHGDVCILNATEWVREHASGYVSRDTSSSPTTGSTVQSVDLIFTRLWIYSHHIYNKCKRKNILEWAKELSLSGFSMPGKPGVVCVEGPQSACEEFWSRLRKLNWKRILIRHREDIPFDGTNDETERQRKFSIFEEKVFSVNGARGNHMDFGQLYQFLNTKGCGDVFQMFFGVEGQ.

An RWD domain is found at 41–165 (AELDLLASMF…EWVREHASGY (125 aa)). Ser275 carries the phosphoserine modification.

Ubiquitous.

The sequence is that of RWD domain-containing protein 2B (RWDD2B) from Homo sapiens (Human).